A 491-amino-acid polypeptide reads, in one-letter code: Peptidyl-prolyl isomerase CWC27 (491 aa).

The PPIase cyclophilin-type domain occupies 11-167 (TNGKVIIDTT…IPPKIRRIHI (157 aa)). Basic and acidic residues-rich tracts occupy residues 186 to 202 (AQQKAKLEAKKDMEQRE), 268 to 298 (DLGKSRENEASEEKKAVDLKNIRAQHEREKA), and 306 to 316 (AEIKRMEEDLR). 2 disordered regions span residues 186–427 (AQQK…IEVD) and 464–491 (RDLLGKPDKKKLKGNPNRRTVRNSGRNR). Residues 277–327 (ASEEKKAVDLKNIRAQHEREKAGGSAARQAEIKRMEEDLRRLKKRSGSVSD) are a coiled coil. A compositionally biased stretch (low complexity) spans 323-333 (GSVSDSESDSS). Basic residues predominate over residues 352 to 367 (ASKRGRAAMKAGNKRG). 2 stretches are compositionally biased toward acidic residues: residues 391–406 (DEPEEEQAEEIEEGEA) and 418–427 (AEEEGGIEVD). A compositionally biased stretch (basic residues) spans 482–491 (RTVRNSGRNR).

Belongs to the cyclophilin-type PPIase family. CWC27 subfamily. As to quaternary structure, associated with the spliceosome.

Its subcellular location is the cytoplasm. It is found in the nucleus. The enzyme catalyses [protein]-peptidylproline (omega=180) = [protein]-peptidylproline (omega=0). Its function is as follows. PPIases accelerate the folding of proteins. It catalyzes the cis-trans isomerization of proline imidic peptide bonds in oligopeptides. Involved in pre-mRNA splicing. The chain is Peptidyl-prolyl isomerase CWC27 (CWC27) from Cryptococcus neoformans var. neoformans serotype D (strain B-3501A) (Filobasidiella neoformans).